We begin with the raw amino-acid sequence, 392 residues long: Na(+)/H(+) antiporter NhaA 2 (392 aa).

A run of 11 helical transmembrane segments spans residues Phe20–Ile40, Leu61–Leu81, Ala99–Phe119, Ile127–Leu147, Ile158–Phe178, Ser181–Leu201, Leu209–His229, Val265–Ile285, Val298–Ile318, Gly336–Phe356, and Glu365–Leu385.

This sequence belongs to the NhaA Na(+)/H(+) (TC 2.A.33) antiporter family.

The protein resides in the cell inner membrane. It carries out the reaction Na(+)(in) + 2 H(+)(out) = Na(+)(out) + 2 H(+)(in). Its function is as follows. Na(+)/H(+) antiporter that extrudes sodium in exchange for external protons. In Pseudomonas syringae pv. syringae (strain B728a), this protein is Na(+)/H(+) antiporter NhaA 2.